Reading from the N-terminus, the 224-residue chain is Putative adhesin RMA_1308 (224 aa).

A signal peptide spans 1-22 (MQKLLLIAATSATILSSSLSFA).

In Rickettsia massiliae (strain Mtu5), this protein is Putative adhesin RMA_1308.